The following is a 343-amino-acid chain: L-threonine 3-dehydrogenase (343 aa).

Cys-40 contributes to the Zn(2+) binding site. Residues Thr-42 and His-45 each act as charge relay system in the active site. Residues His-65, Glu-66, Cys-95, Cys-98, Cys-101, and Cys-109 each contribute to the Zn(2+) site. NAD(+) is bound by residues Ile-177, Asp-197, Arg-202, 264-266, and 288-289; these read LGI and IY.

It belongs to the zinc-containing alcohol dehydrogenase family. In terms of assembly, homotetramer. It depends on Zn(2+) as a cofactor.

It is found in the cytoplasm. The catalysed reaction is L-threonine + NAD(+) = (2S)-2-amino-3-oxobutanoate + NADH + H(+). Its pathway is amino-acid degradation; L-threonine degradation via oxydo-reductase pathway; glycine from L-threonine: step 1/2. Its function is as follows. Catalyzes the NAD(+)-dependent oxidation of L-threonine to 2-amino-3-ketobutyrate. This chain is L-threonine 3-dehydrogenase, found in Aliivibrio fischeri (strain MJ11) (Vibrio fischeri).